Reading from the N-terminus, the 236-residue chain is 7-cyano-7-deazaguanine synthase (236 aa).

Residue 12 to 22 (FSGGQDSTTCL) participates in ATP binding. Residues Cys-200, Cys-215, Cys-218, and Cys-221 each coordinate Zn(2+).

Belongs to the QueC family. Zn(2+) is required as a cofactor.

The enzyme catalyses 7-carboxy-7-deazaguanine + NH4(+) + ATP = 7-cyano-7-deazaguanine + ADP + phosphate + H2O + H(+). It functions in the pathway purine metabolism; 7-cyano-7-deazaguanine biosynthesis. Functionally, catalyzes the ATP-dependent conversion of 7-carboxy-7-deazaguanine (CDG) to 7-cyano-7-deazaguanine (preQ(0)). This chain is 7-cyano-7-deazaguanine synthase, found in Bradyrhizobium sp. (strain ORS 278).